The primary structure comprises 601 residues: Glutathione-regulated potassium-efflux system protein KefB (601 aa).

13 helical membrane passes run 4–24, 29–49, 55–75, 87–107, 111–131, 152–172, 177–197, 207–227, 230–250, 262–282, 284–304, 324–344, and 356–376; these read ADLL…VPLA, IGAV…GLGF, EILH…GLEL, IFGV…GLLM, FLWQ…TAMA, VLLF…LLAG, HFDW…LIGG, FIAA…LVLS, LFMD…GVLL, AIDP…GMSL, LGVL…LVAI, MQFA…FSTA, and ALLL…MKGI. The region spanning 400–519 is the RCK N-terminal domain; it reads KPQVIVVGFG…AGVTQFSRET (120 aa).

Belongs to the monovalent cation:proton antiporter 2 (CPA2) transporter (TC 2.A.37) family. KefB subfamily. Interacts with the regulatory subunit KefG.

It is found in the cell inner membrane. Pore-forming subunit of a potassium efflux system that confers protection against electrophiles. Catalyzes K(+)/H(+) antiport. This chain is Glutathione-regulated potassium-efflux system protein KefB, found in Salmonella schwarzengrund (strain CVM19633).